The sequence spans 394 residues: Ceramide glucosyltransferase (394 aa).

Residues 1-10 lie on the Lumenal side of the membrane; the sequence is MALLDLALEG. A helical membrane pass occupies residues 11–32; sequence MAVFGFVLFLVLWLMHFMAIIY. The Cytoplasmic segment spans residues 33 to 195; that stretch reads TRLHLNKKAT…QVYFGTSHPR (163 aa). Residue Asp-92 is a short sequence motif, D1. An N6-acetyllysine modification is found at Lys-117. Residue Asp-144 is a short sequence motif, D2. A helical membrane pass occupies residues 196–215; that stretch reads YYISANVTGFKCVTGMSCLM. The Lumenal segment spans residues 216–287; it reads RKDVLDQAGG…KLRINMLPAT (72 aa). Position 236 (Asp-236) is a short sequence motif, D3. The Proton acceptor role is filled by Asp-236. The (Q/R)XXRW motif lies at 272-276; it reads RMIRW. A helical transmembrane segment spans residues 288 to 304; it reads IICEPISECFVASLIIG. The Cytoplasmic segment spans residues 305–309; that stretch reads WAAHH. Residues 310-328 form a helical membrane-spanning segment; that stretch reads VFRWDIMVFFMCHCLAWFI. The Lumenal portion of the chain corresponds to 329-348; it reads FDYIQLRGVQGGTLCFSKLD. A helical transmembrane segment spans residues 349-369; sequence YAVAWFIRESMTIYIFLSALW. The Cytoplasmic segment spans residues 370-394; the sequence is DPTISWRTGRYRLRCGGTAEEILDV.

It belongs to the glycosyltransferase 2 family. In terms of assembly, interacts with RTN1; regulates the ceramide glucosyltransferase activity of UGCG. In terms of tissue distribution, found in all tissues examined.

Its subcellular location is the golgi apparatus membrane. It carries out the reaction an N-acylsphing-4-enine + UDP-alpha-D-glucose = a beta-D-glucosyl-(1&lt;-&gt;1')-N-acylsphing-4-enine + UDP + H(+). It catalyses the reaction UDP-alpha-D-xylose + an N-acylsphing-4-enine = a beta-D-xylosyl-(1&lt;-&gt;1')-N-acylsphing-4-enine + UDP + H(+). The catalysed reaction is N-(9Z-octadecenoyl)-sphing-4-enine + UDP-alpha-D-xylose = beta-D-xylosyl-(1&lt;-&gt;1')-N-(9Z-octadecenoyl)-sphing-4-enine + UDP + H(+). Its pathway is lipid metabolism; sphingolipid metabolism. Participates in the initial step of the glucosylceramide-based glycosphingolipid/GSL synthetic pathway at the cytosolic surface of the Golgi. Catalyzes the transfer of glucose from UDP-glucose to ceramide to produce glucosylceramide/GlcCer (such as beta-D-glucosyl-(1&lt;-&gt;1')-N-acylsphing-4-enine). GlcCer is the core component of glycosphingolipids/GSLs, amphipathic molecules consisting of a ceramide lipid moiety embedded in the outer leaflet of the membrane, linked to one of hundreds of different externally oriented oligosaccharide structures. Glycosphingolipids are essential components of membrane microdomains that mediate membrane trafficking and signal transduction, implicated in many fundamental cellular processes, including growth, differentiation, migration, morphogenesis, cell-to-cell and cell-to-matrix interactions. They are required for instance in the proper development and functioning of the nervous system. As an example of their role in signal transduction, they regulate the leptin receptor/LEPR in the leptin-mediated signaling pathway. They also play an important role in the establishment of the skin barrier regulating keratinocyte differentiation and the proper assembly of the cornified envelope. The biosynthesis of GSLs is also required for the proper intestinal endocytic uptake of nutritional lipids. Catalyzes the synthesis of xylosylceramide/XylCer (such as beta-D-xylosyl-(1&lt;-&gt;1')-N-acylsphing-4-enine) using UDP-Xyl as xylose donor. This chain is Ceramide glucosyltransferase, found in Homo sapiens (Human).